We begin with the raw amino-acid sequence, 529 residues long: Peptide chain release factor 3 (529 aa).

In terms of domain architecture, tr-type G spans 11–280; that stretch reads AKRRTFAIIS…GLVEWAPAPM (270 aa). GTP-binding positions include 20 to 27, 88 to 92, and 142 to 145; these read SHPDAGKT, DTPGH, and NKLD.

Belongs to the TRAFAC class translation factor GTPase superfamily. Classic translation factor GTPase family. PrfC subfamily.

Its subcellular location is the cytoplasm. Increases the formation of ribosomal termination complexes and stimulates activities of RF-1 and RF-2. It binds guanine nucleotides and has strong preference for UGA stop codons. It may interact directly with the ribosome. The stimulation of RF-1 and RF-2 is significantly reduced by GTP and GDP, but not by GMP. In Shigella sonnei (strain Ss046), this protein is Peptide chain release factor 3.